The primary structure comprises 243 residues: Probable transcriptional regulatory protein Patl_0550 (243 aa).

Belongs to the TACO1 family.

It localises to the cytoplasm. The chain is Probable transcriptional regulatory protein Patl_0550 from Pseudoalteromonas atlantica (strain T6c / ATCC BAA-1087).